A 554-amino-acid polypeptide reads, in one-letter code: Hydroxylamine reductase (554 aa).

[2Fe-2S] cluster is bound by residues cysteine 3, cysteine 6, cysteine 18, and cysteine 25. Residues histidine 252, glutamate 276, cysteine 320, cysteine 408, cysteine 436, cysteine 461, glutamate 495, and lysine 497 each contribute to the hybrid [4Fe-2O-2S] cluster site. A Cysteine persulfide modification is found at cysteine 408.

Belongs to the HCP family. The cofactor is [2Fe-2S] cluster. Hybrid [4Fe-2O-2S] cluster serves as cofactor.

Its subcellular location is the cytoplasm. It catalyses the reaction A + NH4(+) + H2O = hydroxylamine + AH2 + H(+). Its function is as follows. Catalyzes the reduction of hydroxylamine to form NH(3) and H(2)O. The chain is Hydroxylamine reductase from Photobacterium profundum (strain SS9).